A 225-amino-acid polypeptide reads, in one-letter code: Probable CDP-diacylglycerol--inositol 3-phosphatidyltransferase 2 (225 aa).

2 helical membrane-spanning segments follow: residues Pro6 to Leu26 and Ile29 to Phe49. The Mg(2+) site is built by Asp52 and Asp55. 3 residues coordinate a CDP-1,2-diacyl-sn-glycerol: Gly56, Arg60, and Ser66. Asp73 and Asp77 together coordinate Mg(2+). Asp77 (proton acceptor) is an active-site residue. 3 helical membrane-spanning segments follow: residues Leu84 to Leu104, Met143 to Ala163, and Leu184 to Ile204.

This sequence belongs to the CDP-alcohol phosphatidyltransferase class-I family. The cofactor is Mg(2+). It depends on Mn(2+) as a cofactor.

The protein localises to the membrane. It carries out the reaction a CDP-1,2-diacyl-sn-glycerol + myo-inositol = a 1,2-diacyl-sn-glycero-3-phospho-(1D-myo-inositol) + CMP + H(+). In terms of biological role, catalyzes the biosynthesis of phosphatidylinositol (PtdIns) as well as PtdIns:inositol exchange reaction. May thus act to reduce an excessive cellular PtdIns content. The exchange activity is due to the reverse reaction of PtdIns synthase and is dependent on CMP, which is tightly bound to the enzyme. In Arabidopsis thaliana (Mouse-ear cress), this protein is Probable CDP-diacylglycerol--inositol 3-phosphatidyltransferase 2 (PIS2).